We begin with the raw amino-acid sequence, 209 residues long: Nucleoside triphosphate pyrophosphatase (209 aa).

D79 acts as the Proton acceptor in catalysis.

Belongs to the Maf family. It depends on a divalent metal cation as a cofactor.

Its subcellular location is the cytoplasm. It carries out the reaction a ribonucleoside 5'-triphosphate + H2O = a ribonucleoside 5'-phosphate + diphosphate + H(+). The enzyme catalyses a 2'-deoxyribonucleoside 5'-triphosphate + H2O = a 2'-deoxyribonucleoside 5'-phosphate + diphosphate + H(+). Its function is as follows. Nucleoside triphosphate pyrophosphatase. May have a dual role in cell division arrest and in preventing the incorporation of modified nucleotides into cellular nucleic acids. This chain is Nucleoside triphosphate pyrophosphatase, found in Mycolicibacterium gilvum (strain PYR-GCK) (Mycobacterium gilvum (strain PYR-GCK)).